The sequence spans 146 residues: Nucleoside diphosphate kinase (146 aa).

ATP-binding residues include lysine 11, phenylalanine 59, arginine 87, threonine 93, arginine 104, and asparagine 114. Catalysis depends on histidine 117, which acts as the Pros-phosphohistidine intermediate.

This sequence belongs to the NDK family. As to quaternary structure, homotetramer. Requires Mg(2+) as cofactor.

It is found in the cytoplasm. It catalyses the reaction a 2'-deoxyribonucleoside 5'-diphosphate + ATP = a 2'-deoxyribonucleoside 5'-triphosphate + ADP. The catalysed reaction is a ribonucleoside 5'-diphosphate + ATP = a ribonucleoside 5'-triphosphate + ADP. Functionally, major role in the synthesis of nucleoside triphosphates other than ATP. The ATP gamma phosphate is transferred to the NDP beta phosphate via a ping-pong mechanism, using a phosphorylated active-site intermediate. This chain is Nucleoside diphosphate kinase, found in Anaplasma marginale (strain Florida).